The primary structure comprises 169 residues: Monothiol glutaredoxin-S15, mitochondrial (169 aa).

A mitochondrion-targeting transit peptide spans methionine 1–phenylalanine 37. A disordered region spans residues serine 38–serine 61. The 103-residue stretch at lysine 66–glutamine 168 folds into the Glutaredoxin domain. Lysine 83 provides a ligand contact to glutathione. Cysteine 91 is a binding site for [2Fe-2S] cluster. Glutathione is bound by residues lysine 120, phenylalanine 132, and serine 145–aspartate 146.

Belongs to the glutaredoxin family. CGFS subfamily. As to quaternary structure, [2Fe-2S]-bridged holo-homodimer. Interacts in vitro with SUFE1, BOLA1, BOLA2 and BOLA4. Interacts in vivo only with BOLA4.

Its subcellular location is the mitochondrion. Its function is as follows. May only reduce GSH-thiol disulfides, but not protein disulfides. Participates probably to the maturation of iron-sulfur proteins and to the regulation of the redox state of the BOLA proteins. The protein is Monothiol glutaredoxin-S15, mitochondrial of Arabidopsis thaliana (Mouse-ear cress).